The sequence spans 290 residues: Protoheme IX farnesyltransferase 1 (290 aa).

8 helical membrane-spanning segments follow: residues 8-28, 36-56, 85-105, 108-128, 131-151, 152-172, 211-231, and 269-289; these read ITKP…FFLA, FLLL…GCVV, AAFV…FQVV, LSAV…TMWY, NSVY…LVGY, LAVT…FCLW, AYVV…EAGY, and LLVV…LPFI.

The protein belongs to the UbiA prenyltransferase family. Protoheme IX farnesyltransferase subfamily.

The protein resides in the cell inner membrane. It catalyses the reaction heme b + (2E,6E)-farnesyl diphosphate + H2O = Fe(II)-heme o + diphosphate. The protein operates within porphyrin-containing compound metabolism; heme O biosynthesis; heme O from protoheme: step 1/1. Converts heme B (protoheme IX) to heme O by substitution of the vinyl group on carbon 2 of heme B porphyrin ring with a hydroxyethyl farnesyl side group. This chain is Protoheme IX farnesyltransferase 1, found in Vibrio campbellii (strain ATCC BAA-1116).